Here is a 121-residue protein sequence, read N- to C-terminus: Small ribosomal subunit protein uS12c (121 aa).

This sequence belongs to the universal ribosomal protein uS12 family. As to quaternary structure, part of the 30S ribosomal subunit.

The protein resides in the plastid. It is found in the chloroplast. Functionally, with S4 and S5 plays an important role in translational accuracy. Located at the interface of the 30S and 50S subunits. This chain is Small ribosomal subunit protein uS12c (rps12), found in Bigelowiella natans (Pedinomonas minutissima).